Here is a 460-residue protein sequence, read N- to C-terminus: Bifunctional protein GlmU (460 aa).

The tract at residues methionine 1–arginine 229 is pyrophosphorylase. UDP-N-acetyl-alpha-D-glucosamine is bound by residues leucine 8–glycine 11, lysine 22, glutamine 72, and glycine 77–threonine 78. Aspartate 102 serves as a coordination point for Mg(2+). Positions 139, 154, 169, and 227 each coordinate UDP-N-acetyl-alpha-D-glucosamine. Asparagine 227 serves as a coordination point for Mg(2+). Residues valine 230–asparagine 250 are linker. Positions glycine 251–lysine 460 are N-acetyltransferase. Positions 332 and 350 each coordinate UDP-N-acetyl-alpha-D-glucosamine. Histidine 362 serves as the catalytic Proton acceptor. UDP-N-acetyl-alpha-D-glucosamine is bound by residues tyrosine 365 and asparagine 376. Residues alanine 379, asparagine 385–tyrosine 386, serine 404, alanine 422, and arginine 439 contribute to the acetyl-CoA site.

In the N-terminal section; belongs to the N-acetylglucosamine-1-phosphate uridyltransferase family. The protein in the C-terminal section; belongs to the transferase hexapeptide repeat family. In terms of assembly, homotrimer. Mg(2+) serves as cofactor.

Its subcellular location is the cytoplasm. It catalyses the reaction alpha-D-glucosamine 1-phosphate + acetyl-CoA = N-acetyl-alpha-D-glucosamine 1-phosphate + CoA + H(+). It carries out the reaction N-acetyl-alpha-D-glucosamine 1-phosphate + UTP + H(+) = UDP-N-acetyl-alpha-D-glucosamine + diphosphate. Its pathway is nucleotide-sugar biosynthesis; UDP-N-acetyl-alpha-D-glucosamine biosynthesis; N-acetyl-alpha-D-glucosamine 1-phosphate from alpha-D-glucosamine 6-phosphate (route II): step 2/2. The protein operates within nucleotide-sugar biosynthesis; UDP-N-acetyl-alpha-D-glucosamine biosynthesis; UDP-N-acetyl-alpha-D-glucosamine from N-acetyl-alpha-D-glucosamine 1-phosphate: step 1/1. It functions in the pathway bacterial outer membrane biogenesis; LPS lipid A biosynthesis. Catalyzes the last two sequential reactions in the de novo biosynthetic pathway for UDP-N-acetylglucosamine (UDP-GlcNAc). The C-terminal domain catalyzes the transfer of acetyl group from acetyl coenzyme A to glucosamine-1-phosphate (GlcN-1-P) to produce N-acetylglucosamine-1-phosphate (GlcNAc-1-P), which is converted into UDP-GlcNAc by the transfer of uridine 5-monophosphate (from uridine 5-triphosphate), a reaction catalyzed by the N-terminal domain. The polypeptide is Bifunctional protein GlmU (Streptococcus pyogenes serotype M18 (strain MGAS8232)).